A 625-amino-acid polypeptide reads, in one-letter code: MAIFPRLENYSEVAIDTETTGLDWFRNDKPFGVAIALPNGYSEYYDIRKDLAAYQWLRDSVHKIRRAVNHNMKFDIHMLRKIDVHVNTRTAECTQIRAALINEHLMSYSLDSLAKKYLKAEKVDDIYEELAKLFGGPATRKAQAPNFHRAPESMMRRYAKVDAELALQLWQWQEEEIARQDLHEVWRLEMRLQPHVIESERVGIRVDEELAHKRIGDLTKIVDQTRKEINRLAGFEVNPNPSGSIKRLFEPYKEGDQWYAKDGTPIGTTDAGQPSLGADALKAIKHPAAGLILKCRKMIKTRDTFISGHVLGNIVDGYVHPNINQTKGETGGDDSGTEGTGTGRLSYTRPALQQIPSRDKEVAALVRPIFLPDEGQQWTYGDLDQHEFRIFAHYANPKSLIDAYTENPDLDMHQIVADMTGMPRSAPASGGANAKQINLAMVFNMGGGELASQMSLPYTWETATFKGESEARRFKKAGEEALAVMEKYYRAIPGVREVARQASSLAKSRGYVKTMYGRKIRFPGGMFTYKASGLVYQGTAADFNKRNICEIAEYIESECPHYRFLLNIHDEYSMSMVDEGDITVRHLKEMKRLVENKGLRVPIRIDFGGLAPNWWEATKMDAVTK.

Positions 324–345 (NQTKGETGGDDSGTEGTGTGRL) are disordered.

This sequence belongs to the DNA polymerase type-A family. DpoZ subfamily.

The enzyme catalyses DNA(n) + a 2'-deoxyribonucleoside 5'-triphosphate = DNA(n+1) + diphosphate. It carries out the reaction dZTP + DNA(n) = DNA(n)-Z + diphosphate. DNA polymerase that preferentially incorporates the non-canonical base aminoadenine/dZTP instead of adenine into the synthesized DNA. More efficient in using dZTP instead of dATP as a substrate. In addition to this preference for dZTP, the phage also encodes a dATP triphosphohydrolase that removes dATP and its precursor dADP from the nucleotide pool of the host. The protein is DNA polymerase DpoZ (dpoZ) of Salmonella enterica (Salmonella choleraesuis).